We begin with the raw amino-acid sequence, 184 residues long: ATP synthase subunit b, chloroplastic (184 aa).

Residues 27–49 traverse the membrane as a helical segment; it reads LATNPINLSVVFGVLIFFGKGVL.

The protein belongs to the ATPase B chain family. As to quaternary structure, F-type ATPases have 2 components, F(1) - the catalytic core - and F(0) - the membrane proton channel. F(1) has five subunits: alpha(3), beta(3), gamma(1), delta(1), epsilon(1). F(0) has four main subunits: a(1), b(1), b'(1) and c(10-14). The alpha and beta chains form an alternating ring which encloses part of the gamma chain. F(1) is attached to F(0) by a central stalk formed by the gamma and epsilon chains, while a peripheral stalk is formed by the delta, b and b' chains.

Its subcellular location is the plastid. It is found in the chloroplast thylakoid membrane. In terms of biological role, f(1)F(0) ATP synthase produces ATP from ADP in the presence of a proton or sodium gradient. F-type ATPases consist of two structural domains, F(1) containing the extramembraneous catalytic core and F(0) containing the membrane proton channel, linked together by a central stalk and a peripheral stalk. During catalysis, ATP synthesis in the catalytic domain of F(1) is coupled via a rotary mechanism of the central stalk subunits to proton translocation. Functionally, component of the F(0) channel, it forms part of the peripheral stalk, linking F(1) to F(0). The polypeptide is ATP synthase subunit b, chloroplastic (Barbarea verna (Land cress)).